A 380-amino-acid polypeptide reads, in one-letter code: MKKQCVAMLLAGGKGSRLSGLTKNMAKPAVSFGGKYRIIDFTLSNCSNSGIDTVGILTQYQPLELNSYIGIGSAWDLDRYNGGVTVLPPYAESSEVKWYKGTASSIYENLNYLNQYDPEYVLILSGDHIYKMDYGKMLDYHIEKKADVTISVIEVGWEEASRFGIMKANPDGTITHFDEKPKFPKSNLASMGIYIFNWPLLKQYLEMDDQNPYSSHDFGKDIIPLLLEEKKKLSAYPFKGYWKDVGTVQSLWEANMDLLKEDSELKLFERKWKIYSVNPNQPPQFISSDAQVQDSLVNEGCVVYGNVSHSVLFQGVTVGKHTTVTSSVIMPDVTIGEHVVIENAIVPNGMVLPDGAVIRSEKDIEEVLLVSEEFVEKELI.

Residues Tyr99, Gly164, 179–180, and Ser190 each bind alpha-D-glucose 1-phosphate; that span reads EK.

This sequence belongs to the bacterial/plant glucose-1-phosphate adenylyltransferase family. Homotetramer.

The catalysed reaction is alpha-D-glucose 1-phosphate + ATP + H(+) = ADP-alpha-D-glucose + diphosphate. It participates in glycan biosynthesis; glycogen biosynthesis. Involved in the biosynthesis of ADP-glucose, a building block required for the elongation reactions to produce glycogen. Catalyzes the reaction between ATP and alpha-D-glucose 1-phosphate (G1P) to produce pyrophosphate and ADP-Glc. The chain is Glucose-1-phosphate adenylyltransferase from Bacillus subtilis (strain 168).